A 637-amino-acid chain; its full sequence is Coiled-coil domain-containing protein 22 homolog (637 aa).

Coiled coils occupy residues 322-489 and 608-637; these read ETEI…YKQA and SDRV…ETKN.

Belongs to the CCDC22 family.

This is Coiled-coil domain-containing protein 22 homolog from Dictyostelium discoideum (Social amoeba).